Here is a 749-residue protein sequence, read N- to C-terminus: NAD(P)H-quinone oxidoreductase subunit 5, chloroplastic (749 aa).

A run of 17 helical transmembrane segments spans residues 9-29, 40-60, 89-109, 125-145, 147-167, 185-205, 219-239, 258-278, 290-312, 327-347, 354-374, 396-416, 425-445, 549-569, 608-628, 694-714, and 725-745; these read WIIPFLPLPVPMLIGLGLLLF, WAFQSVLLLSIVMIFSMNLSI, IDPLTSIMLILITTVGIMVLI, FAYMSFFSTSMLGLVTSSNLI, IYIFWELVGICSYLLIGFWFT, GDFGLLLGILGFYWITGSFEF, NEVNFVFVTLCAVLLFAGAVA, TPISALIHAATMVAAGIFLVA, IMNFISLIGIITVFLGATLALAQ, LGYMMLALGMGSYRSALFHLI, ALLFLGSGSVIHSMETLVGYC, TSFLLGTLSLCGIPPLACFWS, WLYSPIFAIIAWSTAGLTAFY, LFPILILILFTLFVGFLGIPF, VFSVSIASFGIFIAFFLYKPV, IIDGIPNGVCLISFFVAEVIK, and LFFYFSYVSIFLLIYYFLNVF.

This sequence belongs to the complex I subunit 5 family. In terms of assembly, NDH is composed of at least 16 different subunits, 5 of which are encoded in the nucleus.

Its subcellular location is the plastid. The protein localises to the chloroplast thylakoid membrane. The enzyme catalyses a plastoquinone + NADH + (n+1) H(+)(in) = a plastoquinol + NAD(+) + n H(+)(out). It carries out the reaction a plastoquinone + NADPH + (n+1) H(+)(in) = a plastoquinol + NADP(+) + n H(+)(out). NDH shuttles electrons from NAD(P)H:plastoquinone, via FMN and iron-sulfur (Fe-S) centers, to quinones in the photosynthetic chain and possibly in a chloroplast respiratory chain. The immediate electron acceptor for the enzyme in this species is believed to be plastoquinone. Couples the redox reaction to proton translocation, and thus conserves the redox energy in a proton gradient. In Atractylodes lancea (Atractylodes japonica), this protein is NAD(P)H-quinone oxidoreductase subunit 5, chloroplastic (ndhF).